Reading from the N-terminus, the 444-residue chain is Spermidine/putrescine import ATP-binding protein PotA (444 aa).

The region spanning 11–332 is the ABC transporter domain; sequence ISLVDVDKEF…PVNKWVANFI (322 aa). 43-50 contributes to the ATP binding site; that stretch reads GPSGSGKT. The segment at 111–201 is insert; it reads RIKKKAEEIP…ESFKKKYLTR (91 aa).

It belongs to the ABC transporter superfamily. Spermidine/putrescine importer (TC 3.A.1.11.1) family. In terms of assembly, the complex is composed of two ATP-binding proteins (PotA), two transmembrane proteins (PotB and PotC) and a solute-binding protein (PotD).

The protein localises to the cell membrane. It carries out the reaction ATP + H2O + polyamine-[polyamine-binding protein]Side 1 = ADP + phosphate + polyamineSide 2 + [polyamine-binding protein]Side 1.. In terms of biological role, part of the ABC transporter complex PotABCD involved in spermidine/putrescine import. Responsible for energy coupling to the transport system. This is Spermidine/putrescine import ATP-binding protein PotA from Mesomycoplasma hyopneumoniae (strain 232) (Mycoplasma hyopneumoniae).